The sequence spans 158 residues: Ribonuclease H (158 aa).

Positions 2-143 constitute an RNase H type-1 domain; it reads PEKIIELFTD…VDALLNRVMD (142 aa). 4 residues coordinate Mg(2+): Asp11, Glu49, Asp71, and Asp135.

The protein belongs to the RNase H family. Monomer. Mg(2+) is required as a cofactor.

The protein resides in the cytoplasm. It catalyses the reaction Endonucleolytic cleavage to 5'-phosphomonoester.. In terms of biological role, endonuclease that specifically degrades the RNA of RNA-DNA hybrids. The chain is Ribonuclease H from Acidithiobacillus ferrooxidans (strain ATCC 23270 / DSM 14882 / CIP 104768 / NCIMB 8455) (Ferrobacillus ferrooxidans (strain ATCC 23270)).